A 225-amino-acid chain; its full sequence is PKHD-type hydroxylase YbiX (225 aa).

Residues 78-177 (TLSTPLFNRY…RVASFMWIQS (100 aa)) enclose the Fe2OG dioxygenase domain. Residues histidine 96, aspartate 98, and histidine 158 each coordinate Fe cation. Arginine 168 is a binding site for 2-oxoglutarate.

The cofactor is Fe(2+). L-ascorbate serves as cofactor.

This chain is PKHD-type hydroxylase YbiX, found in Shigella boydii serotype 4 (strain Sb227).